A 153-amino-acid chain; its full sequence is Regulatory protein RecX (153 aa).

The protein belongs to the RecX family.

It localises to the cytoplasm. In terms of biological role, modulates RecA activity. The polypeptide is Regulatory protein RecX (Pseudomonas aeruginosa (strain UCBPP-PA14)).